Reading from the N-terminus, the 216-residue chain is Cytochrome c biogenesis ATP-binding export protein CcmA (216 aa).

The region spanning 11–216 is the ABC transporter domain; that stretch reads VSASKLTCIR…RKIRLDYRFV (206 aa). 43–50 provides a ligand contact to ATP; that stretch reads GPNGAGKT.

Belongs to the ABC transporter superfamily. CcmA exporter (TC 3.A.1.107) family. The complex is composed of two ATP-binding proteins (CcmA) and two transmembrane proteins (CcmB).

It is found in the cell inner membrane. It carries out the reaction heme b(in) + ATP + H2O = heme b(out) + ADP + phosphate + H(+). Functionally, part of the ABC transporter complex CcmAB involved in the biogenesis of c-type cytochromes; once thought to export heme, this seems not to be the case, but its exact role is uncertain. Responsible for energy coupling to the transport system. The chain is Cytochrome c biogenesis ATP-binding export protein CcmA from Shewanella sp. (strain MR-4).